The chain runs to 34 residues: Endoglucanase 1 (34 aa).

The catalysed reaction is Endohydrolysis of (1-&gt;4)-beta-D-glucosidic linkages in cellulose, lichenin and cereal beta-D-glucans.. This Sclerotinia sclerotiorum (White mold) protein is Endoglucanase 1.